Here is a 126-residue protein sequence, read N- to C-terminus: Holo-[acyl-carrier-protein] synthase (126 aa).

Asp9 and Glu58 together coordinate Mg(2+).

It belongs to the P-Pant transferase superfamily. AcpS family. The cofactor is Mg(2+).

Its subcellular location is the cytoplasm. It catalyses the reaction apo-[ACP] + CoA = holo-[ACP] + adenosine 3',5'-bisphosphate + H(+). In terms of biological role, transfers the 4'-phosphopantetheine moiety from coenzyme A to a Ser of acyl-carrier-protein. The chain is Holo-[acyl-carrier-protein] synthase from Vibrio vulnificus (strain CMCP6).